Consider the following 257-residue polypeptide: Ribonuclease PH (257 aa).

Phosphate-binding positions include Arg-86 and 124–126; that span reads GTR.

It belongs to the RNase PH family. As to quaternary structure, homohexameric ring arranged as a trimer of dimers.

The enzyme catalyses tRNA(n+1) + phosphate = tRNA(n) + a ribonucleoside 5'-diphosphate. In terms of biological role, phosphorolytic 3'-5' exoribonuclease that plays an important role in tRNA 3'-end maturation. Removes nucleotide residues following the 3'-CCA terminus of tRNAs; can also add nucleotides to the ends of RNA molecules by using nucleoside diphosphates as substrates, but this may not be physiologically important. Probably plays a role in initiation of 16S rRNA degradation (leading to ribosome degradation) during starvation. The protein is Ribonuclease PH of Sulfurihydrogenibium sp. (strain YO3AOP1).